Here is a 134-residue protein sequence, read N- to C-terminus: ATP synthase epsilon chain (134 aa).

Belongs to the ATPase epsilon chain family. As to quaternary structure, F-type ATPases have 2 components, CF(1) - the catalytic core - and CF(0) - the membrane proton channel. CF(1) has five subunits: alpha(3), beta(3), gamma(1), delta(1), epsilon(1). CF(0) has three main subunits: a, b and c.

The protein localises to the cell membrane. In terms of biological role, produces ATP from ADP in the presence of a proton gradient across the membrane. The protein is ATP synthase epsilon chain of Clostridium botulinum (strain Eklund 17B / Type B).